A 665-amino-acid chain; its full sequence is Alpha-1,4-glucan:maltose-1-phosphate maltosyltransferase (665 aa).

Positions 255, 315, and 350 each coordinate alpha-maltose 1-phosphate. Residue aspartate 386 is the Nucleophile of the active site. Asparagine 387 contacts alpha-maltose 1-phosphate. Glutamate 415 (proton donor) is an active-site residue. An alpha-maltose 1-phosphate-binding site is contributed by lysine 526–tyrosine 527.

This sequence belongs to the glycosyl hydrolase 13 family. GlgE subfamily. As to quaternary structure, homodimer.

It catalyses the reaction alpha-maltose 1-phosphate + [(1-&gt;4)-alpha-D-glucosyl](n) = [(1-&gt;4)-alpha-D-glucosyl](n+2) + phosphate. Its function is as follows. Maltosyltransferase that uses maltose 1-phosphate (M1P) as the sugar donor to elongate linear or branched alpha-(1-&gt;4)-glucans. Is involved in a branched alpha-glucan biosynthetic pathway from trehalose, together with TreS, Mak and GlgB. This Myxococcus xanthus (strain DK1622) protein is Alpha-1,4-glucan:maltose-1-phosphate maltosyltransferase.